A 456-amino-acid polypeptide reads, in one-letter code: Phosphomethylpyrimidine synthase (456 aa).

Substrate contacts are provided by residues Asn-80, Met-109, Tyr-139, His-175, 195–197 (SRG), 236–239 (DSLR), and Glu-275. His-279 is a Zn(2+) binding site. A substrate-binding site is contributed by Tyr-302. His-343 is a Zn(2+) binding site. 3 residues coordinate [4Fe-4S] cluster: Cys-423, Cys-426, and Cys-431.

It belongs to the ThiC family. The cofactor is [4Fe-4S] cluster.

It carries out the reaction 5-amino-1-(5-phospho-beta-D-ribosyl)imidazole + S-adenosyl-L-methionine = 4-amino-2-methyl-5-(phosphooxymethyl)pyrimidine + CO + 5'-deoxyadenosine + formate + L-methionine + 3 H(+). It participates in cofactor biosynthesis; thiamine diphosphate biosynthesis. Catalyzes the synthesis of the hydroxymethylpyrimidine phosphate (HMP-P) moiety of thiamine from aminoimidazole ribotide (AIR) in a radical S-adenosyl-L-methionine (SAM)-dependent reaction. This chain is Phosphomethylpyrimidine synthase, found in Prochlorococcus marinus (strain MIT 9312).